Reading from the N-terminus, the 117-residue chain is UPF0344 protein GWCH70_0687 (117 aa).

4 consecutive transmembrane segments (helical) span residues 2–22 (THAHITSWLITVILFFIAVSL), 32–52 (IVQMALRLFYIFTVITGGLLL), 55–75 (IASISILYIIKAIVGLWLIGA), and 97–117 (IVAFVLVLFLGFMLPLGFDLF).

Belongs to the UPF0344 family.

It is found in the cell membrane. The polypeptide is UPF0344 protein GWCH70_0687 (Geobacillus sp. (strain WCH70)).